Here is a 242-residue protein sequence, read N- to C-terminus: Phosphoribosyl isomerase A (242 aa).

D12 acts as the Proton acceptor in catalysis. D131 acts as the Proton donor in catalysis.

The protein belongs to the HisA/HisF family.

The protein resides in the cytoplasm. The enzyme catalyses 1-(5-phospho-beta-D-ribosyl)-5-[(5-phospho-beta-D-ribosylamino)methylideneamino]imidazole-4-carboxamide = 5-[(5-phospho-1-deoxy-D-ribulos-1-ylimino)methylamino]-1-(5-phospho-beta-D-ribosyl)imidazole-4-carboxamide. The catalysed reaction is N-(5-phospho-beta-D-ribosyl)anthranilate = 1-(2-carboxyphenylamino)-1-deoxy-D-ribulose 5-phosphate. It functions in the pathway amino-acid biosynthesis; L-histidine biosynthesis; L-histidine from 5-phospho-alpha-D-ribose 1-diphosphate: step 4/9. It participates in amino-acid biosynthesis; L-tryptophan biosynthesis; L-tryptophan from chorismate: step 3/5. Its function is as follows. Involved in both the histidine and tryptophan biosynthetic pathways. This chain is Phosphoribosyl isomerase A, found in Streptomyces avermitilis (strain ATCC 31267 / DSM 46492 / JCM 5070 / NBRC 14893 / NCIMB 12804 / NRRL 8165 / MA-4680).